The chain runs to 141 residues: Nucleoside diphosphate kinase (141 aa).

ATP-binding residues include K11, F59, R87, T93, R104, and N114. H117 (pros-phosphohistidine intermediate) is an active-site residue.

Belongs to the NDK family. Homotetramer. It depends on Mg(2+) as a cofactor.

It is found in the cytoplasm. It carries out the reaction a 2'-deoxyribonucleoside 5'-diphosphate + ATP = a 2'-deoxyribonucleoside 5'-triphosphate + ADP. The catalysed reaction is a ribonucleoside 5'-diphosphate + ATP = a ribonucleoside 5'-triphosphate + ADP. Functionally, major role in the synthesis of nucleoside triphosphates other than ATP. The ATP gamma phosphate is transferred to the NDP beta phosphate via a ping-pong mechanism, using a phosphorylated active-site intermediate. The protein is Nucleoside diphosphate kinase of Acidovorax sp. (strain JS42).